The following is a 378-amino-acid chain: Erythronate-4-phosphate dehydrogenase (378 aa).

2 residues coordinate substrate: Ser45 and Thr66. The NAD(+) site is built by Asp146 and Thr175. Residue Arg208 is part of the active site. Asp232 contacts NAD(+). The active site involves Glu237. Residue His254 is the Proton donor of the active site. Residue Gly257 participates in NAD(+) binding. Residue Tyr258 coordinates substrate.

The protein belongs to the D-isomer specific 2-hydroxyacid dehydrogenase family. PdxB subfamily. Homodimer.

It is found in the cytoplasm. The enzyme catalyses 4-phospho-D-erythronate + NAD(+) = (R)-3-hydroxy-2-oxo-4-phosphooxybutanoate + NADH + H(+). The protein operates within cofactor biosynthesis; pyridoxine 5'-phosphate biosynthesis; pyridoxine 5'-phosphate from D-erythrose 4-phosphate: step 2/5. Its function is as follows. Catalyzes the oxidation of erythronate-4-phosphate to 3-hydroxy-2-oxo-4-phosphonooxybutanoate. This chain is Erythronate-4-phosphate dehydrogenase, found in Escherichia coli O7:K1 (strain IAI39 / ExPEC).